The chain runs to 547 residues: Elongator complex protein 3 (547 aa).

The Radical SAM core domain maps to 82–372 (RTASGIAVVA…YRVQRDIPMP (291 aa)). [4Fe-4S] cluster is bound by residues Cys-99, Cys-109, and Cys-112. A Phosphoserine modification is found at Ser-161. Lys-164 is an acetyl-CoA binding site. Phosphotyrosine is present on Tyr-202. Lys-229 is modified (N6-methyllysine). Phosphotyrosine is present on Tyr-251. The 152-residue stretch at 396–547 (IQCRDVRTRE…QGPYMVKTLE (152 aa)) folds into the N-acetyltransferase domain. Acetyl-CoA is bound by residues 474-477 (ELHV), 497-499 (FGM), and Tyr-530.

It belongs to the ELP3 family. As to quaternary structure, component of the elongator complex which consists of ELP1, ELP2, ELP3, ELP4, ELP5 and ELP6. ELP1, ELP2 and ELP3 form the elongator core complex. Interacts with alpha-tubulin. It depends on [4Fe-4S] cluster as a cofactor. In terms of processing, tyrosine-phosphorylated; phosphorylation on Tyr-202 does not affect elongator complex integrity or ELP3 protein stability. Also serine/threonine-phosphorylated.

Its subcellular location is the cytoplasm. It localises to the nucleus. The catalysed reaction is uridine(34) in tRNA + acetyl-CoA + S-adenosyl-L-methionine + H2O = 5-(carboxymethyl)uridine(34) in tRNA + 5'-deoxyadenosine + L-methionine + CoA + 2 H(+). It functions in the pathway tRNA modification; 5-methoxycarbonylmethyl-2-thiouridine-tRNA biosynthesis. Catalytic tRNA acetyltransferase subunit of the elongator complex which is required for multiple tRNA modifications, including mcm5U (5-methoxycarbonylmethyl uridine), mcm5s2U (5-methoxycarbonylmethyl-2-thiouridine), and ncm5U (5-carbamoylmethyl uridine). In the elongator complex, acts as a tRNA uridine(34) acetyltransferase by mediating formation of carboxymethyluridine in the wobble base at position 34 in tRNAs. May also act as a protein lysine acetyltransferase by mediating acetylation of target proteins; such activity is however unclear in vivo and recent evidences suggest that ELP3 primarily acts as a tRNA acetyltransferase. Involved in neurogenesis: regulates the migration and branching of projection neurons in the developing cerebral cortex, through a process depending on alpha-tubulin acetylation. Required for acetylation of GJA1 in the developing cerebral cortex. This is Elongator complex protein 3 from Bos taurus (Bovine).